The following is a 183-amino-acid chain: Shikimate kinase (183 aa).

19–24 (GAGKTT) contacts ATP. T23 provides a ligand contact to Mg(2+). The substrate site is built by D41, R65, and G87. Residue R124 coordinates ATP. R143 provides a ligand contact to substrate.

It belongs to the shikimate kinase family. Monomer. The cofactor is Mg(2+).

It localises to the cytoplasm. The catalysed reaction is shikimate + ATP = 3-phosphoshikimate + ADP + H(+). The protein operates within metabolic intermediate biosynthesis; chorismate biosynthesis; chorismate from D-erythrose 4-phosphate and phosphoenolpyruvate: step 5/7. Its function is as follows. Catalyzes the specific phosphorylation of the 3-hydroxyl group of shikimic acid using ATP as a cosubstrate. This is Shikimate kinase from Thermosynechococcus vestitus (strain NIES-2133 / IAM M-273 / BP-1).